Consider the following 259-residue polypeptide: Hemin import ATP-binding protein HmuV (259 aa).

Residues 2–238 form the ABC transporter domain; sequence IEARDLNVSI…ALLSEVFDCQ (237 aa). 34-41 is a binding site for ATP; sequence GPNGSGKS.

The protein belongs to the ABC transporter superfamily. Heme (hemin) importer (TC 3.A.1.14.5) family. In terms of assembly, the complex is composed of two ATP-binding proteins (HmuV), two transmembrane proteins (HmuU) and a solute-binding protein (HmuT).

The protein localises to the cell inner membrane. Functionally, part of the ABC transporter complex HmuTUV involved in hemin import. Responsible for energy coupling to the transport system. The sequence is that of Hemin import ATP-binding protein HmuV from Chelativorans sp. (strain BNC1).